A 424-amino-acid chain; its full sequence is MFRQDALENRKMKWQGRAILLPGIPLWLIMLGSIVFITAFLMFIIVGTYSRRVNVSGEVTTWPRAVNIYSGVQGFVVRQFVHEGQLIKKGDPVYLIDISKSTRSGIVTDNHRRDIENQLVRVDNIISRLEESKKITLDTLEKQRLQYTDAFRRSSDIIQRAEEGIKIMKNNMENYRNYQAKGLINKDQLTNQVALYYQQQNNLLSLSGQNEQNALQITTLESQIQTQAADFDNRIYQMELQRYELQKELVNTDVEGEIIIRALTDGKVDSLSVTVGQMVNTGDSLLQVIPENIENYYLILWVPNDAVPYISAGDKVNIRYEAFPAEKFGQFSATVKTISRTPASTQEMLTYKGAPQNTPGASVPWYKVIAMPEKQIIRYDEKYLPLENGMKAESTLFLEKRRIYQWMLSPFYDMKHSATGPLND.

Residues 1–25 (MFRQDALENRKMKWQGRAILLPGIP) are Cytoplasmic-facing. The chain crosses the membrane as a helical span at residues 26 to 46 (LWLIMLGSIVFITAFLMFIIV). Topologically, residues 47–424 (GTYSRRVNVS…KHSATGPLND (378 aa)) are periplasmic.

The protein belongs to the membrane fusion protein (MFP) (TC 8.A.1) family.

The protein localises to the cell inner membrane. Functionally, probably involved, in conjunction with MchF, in the secretion of microcin H47. The protein is Microcin H47 secretion protein MchE (mchE) of Escherichia coli.